Reading from the N-terminus, the 548-residue chain is Probable malate:quinone oxidoreductase (548 aa).

The tract at residues 521 to 548 (DKPQAADSTPKPQLKPQPVQKEVADIAL) is disordered. Over residues 530-541 (PKPQLKPQPVQK) the composition is skewed to low complexity.

This sequence belongs to the MQO family. FAD serves as cofactor.

It catalyses the reaction (S)-malate + a quinone = a quinol + oxaloacetate. It participates in carbohydrate metabolism; tricarboxylic acid cycle; oxaloacetate from (S)-malate (quinone route): step 1/1. This is Probable malate:quinone oxidoreductase from Escherichia coli O17:K52:H18 (strain UMN026 / ExPEC).